The sequence spans 131 residues: Small ribosomal subunit protein bS6 (131 aa).

Residues 96-131 (ITEASPMAKAKDERDSRRGPAGDRSYDEANAEEIAE) form a disordered region. Residues 104 to 122 (KAKDERDSRRGPAGDRSYD) show a composition bias toward basic and acidic residues.

Belongs to the bacterial ribosomal protein bS6 family.

In terms of biological role, binds together with bS18 to 16S ribosomal RNA. The chain is Small ribosomal subunit protein bS6 from Shewanella oneidensis (strain ATCC 700550 / JCM 31522 / CIP 106686 / LMG 19005 / NCIMB 14063 / MR-1).